The primary structure comprises 216 residues: MIDRDPIDVFNNTLVPMVVEQTNRGERSYDIYSRLLKERIIFLTGQVHDGVASLICAQLLFLESENPSKDISFYINSPGGVVTSGMAIYDTMQYIRSPVSTVCIGQAASMGSLLLCAGEAGKRYATPNARIMIHQPSGGFQGQAADIEIQAREILALRERLNRIYVKHTGQPLETIERAMDRDNYMTAEESRAFGLTDSVIERRALSDDGDTKSSS.

Ser-109 (nucleophile) is an active-site residue. His-134 is a catalytic residue.

Belongs to the peptidase S14 family. As to quaternary structure, fourteen ClpP subunits assemble into 2 heptameric rings which stack back to back to give a disk-like structure with a central cavity, resembling the structure of eukaryotic proteasomes.

The protein localises to the cytoplasm. It catalyses the reaction Hydrolysis of proteins to small peptides in the presence of ATP and magnesium. alpha-casein is the usual test substrate. In the absence of ATP, only oligopeptides shorter than five residues are hydrolyzed (such as succinyl-Leu-Tyr-|-NHMec, and Leu-Tyr-Leu-|-Tyr-Trp, in which cleavage of the -Tyr-|-Leu- and -Tyr-|-Trp bonds also occurs).. Functionally, cleaves peptides in various proteins in a process that requires ATP hydrolysis. Has a chymotrypsin-like activity. Plays a major role in the degradation of misfolded proteins. In Rhodospirillum rubrum (strain ATCC 11170 / ATH 1.1.1 / DSM 467 / LMG 4362 / NCIMB 8255 / S1), this protein is ATP-dependent Clp protease proteolytic subunit.